Here is a 614-residue protein sequence, read N- to C-terminus: Phosphomethylpyrimidine synthase (614 aa).

Substrate contacts are provided by residues Asn-226, Met-255, Tyr-284, His-320, 340–342 (SRG), 381–384 (DGLR), and Glu-420. His-424 is a binding site for Zn(2+). Tyr-447 contributes to the substrate binding site. His-488 provides a ligand contact to Zn(2+). Cys-568, Cys-571, and Cys-576 together coordinate [4Fe-4S] cluster.

This sequence belongs to the ThiC family. As to quaternary structure, homodimer. Requires [4Fe-4S] cluster as cofactor.

It catalyses the reaction 5-amino-1-(5-phospho-beta-D-ribosyl)imidazole + S-adenosyl-L-methionine = 4-amino-2-methyl-5-(phosphooxymethyl)pyrimidine + CO + 5'-deoxyadenosine + formate + L-methionine + 3 H(+). It functions in the pathway cofactor biosynthesis; thiamine diphosphate biosynthesis. In terms of biological role, catalyzes the synthesis of the hydroxymethylpyrimidine phosphate (HMP-P) moiety of thiamine from aminoimidazole ribotide (AIR) in a radical S-adenosyl-L-methionine (SAM)-dependent reaction. This is Phosphomethylpyrimidine synthase from Acidovorax sp. (strain JS42).